We begin with the raw amino-acid sequence, 424 residues long: UDP-N-acetylglucosamine 1-carboxyvinyltransferase (424 aa).

22 to 23 (KN) serves as a coordination point for phosphoenolpyruvate. Residue R93 coordinates UDP-N-acetyl-alpha-D-glucosamine. The active-site Proton donor is C117. Position 117 is a 2-(S-cysteinyl)pyruvic acid O-phosphothioketal (C117). Residues 162–165 (KVSV), D307, and I329 contribute to the UDP-N-acetyl-alpha-D-glucosamine site.

The protein belongs to the EPSP synthase family. MurA subfamily.

Its subcellular location is the cytoplasm. It carries out the reaction phosphoenolpyruvate + UDP-N-acetyl-alpha-D-glucosamine = UDP-N-acetyl-3-O-(1-carboxyvinyl)-alpha-D-glucosamine + phosphate. It participates in cell wall biogenesis; peptidoglycan biosynthesis. Cell wall formation. Adds enolpyruvyl to UDP-N-acetylglucosamine. The protein is UDP-N-acetylglucosamine 1-carboxyvinyltransferase of Actinobacillus pleuropneumoniae serotype 7 (strain AP76).